The chain runs to 217 residues: MSTESKLREEICRIGASLYQRGYTVGSAGNISARLDDGWLITPTDACLGMMDPAAVAKVATDGSWVSGDKPSKTLMLHRAIYDNNREAHAVVHTHSTHLVALTLAGVWQPDDVLPPLTPYYVMKVGHIPLIPYHRPGDPAVAARVATLAAQVRGVLLERLGPVVWESSVSRAAFALEELEETAKLWMTMKDTPGFAARAALPDGALTELRDAFQARW.

Zn(2+)-binding residues include His-93 and His-95. The active-site Proton donor is the Tyr-120.

It belongs to the aldolase class II family. AraD/FucA subfamily. Requires Zn(2+) as cofactor.

It catalyses the reaction 3-dehydro-4-O-phospho-D-erythronate + H(+) = dihydroxyacetone phosphate + CO2. It carries out the reaction 3-dehydro-4-O-phospho-L-erythronate + H(+) = dihydroxyacetone phosphate + CO2. In terms of biological role, catalyzes the decarboxylation of 3-oxo-tetronate 4-phosphate to dihydroxyacetone phosphate (DHAP) and CO(2). The protein is 3-oxo-tetronate 4-phosphate decarboxylase of Cupriavidus necator (strain ATCC 17699 / DSM 428 / KCTC 22496 / NCIMB 10442 / H16 / Stanier 337) (Ralstonia eutropha).